Consider the following 298-residue polypeptide: Elongation factor Ts (298 aa).

Residues 79–82 (TDFV) are involved in Mg(2+) ion dislocation from EF-Tu.

It belongs to the EF-Ts family.

It localises to the cytoplasm. Its function is as follows. Associates with the EF-Tu.GDP complex and induces the exchange of GDP to GTP. It remains bound to the aminoacyl-tRNA.EF-Tu.GTP complex up to the GTP hydrolysis stage on the ribosome. The protein is Elongation factor Ts (tsf) of Mycoplasma genitalium (strain ATCC 33530 / DSM 19775 / NCTC 10195 / G37) (Mycoplasmoides genitalium).